The following is a 559-amino-acid chain: MYLSRSAEWSALESHYQDISHQAMIDLFSTDPNRHERFSLSFNAIHLDYSKNRISARTMELLMDLVRRSGIEKKRRQMFEGEQINFTEHRSVLHTALRRPPGYTMTIDGNDVASEVSDVLDQMKAFCKKVISGEWKGYTGKRITDVVNIGIGGSDLGPFMVTEALKPFAHGKLKVHFVSNVDGSHLVETLRGLNPETTLFIIASKTFTTQETLANAVSARAWFLVKAGNRDHVAKHFVAVSTNREKVEEFGIDPDNMFRFWDWVGGRYSLWSAIGLSIALYLGFDRFRELLAGAHAMDEHFLNAPLEENMPMILAMLGIWYNNFFGAHSQAIIPYDQYLHRFPAYLQQLDMESNGKRVDRAGHEVDYATGPVIWGEPGTNAQHAFFQLLHQGTEIVPVDFIVSLKSQNPVGEHHDMLVANCFAQSEALMKGKSEAEARAELEAAGLSGGDLEKLLPHKLFPGNRPTNTIVLDELNPFNLGSLIALYEHKVFVQGVVWNINSFDQWGVELGKQLAKAILPEFDAVDPVETHDASTNALINRYRQFRNGLKFPKSNQLKMF.

Glutamate 352 serves as the catalytic Proton donor. Residues histidine 383 and lysine 511 contribute to the active site.

It belongs to the GPI family.

The protein resides in the cytoplasm. The enzyme catalyses alpha-D-glucose 6-phosphate = beta-D-fructose 6-phosphate. Its pathway is carbohydrate biosynthesis; gluconeogenesis. It functions in the pathway carbohydrate degradation; glycolysis; D-glyceraldehyde 3-phosphate and glycerone phosphate from D-glucose: step 2/4. In terms of biological role, catalyzes the reversible isomerization of glucose-6-phosphate to fructose-6-phosphate. The polypeptide is Glucose-6-phosphate isomerase (Chlorobaculum tepidum (strain ATCC 49652 / DSM 12025 / NBRC 103806 / TLS) (Chlorobium tepidum)).